The primary structure comprises 549 residues: Alpha-amylase (549 aa).

Residues 1–34 form the signal peptide; sequence MLTFHRIIRKGWMFLLAFLLTALLFCPTGQPAKA. Residues Asp-139, Asp-196, Ala-218, Asp-220, Asp-231, and Asp-237 each contribute to the Ca(2+) site. A Na(+)-binding site is contributed by Asp-196. The Na(+) site is built by Asp-220, Asp-231, Asp-237, and Leu-238. Asp-239 is a binding site for Ca(2+). Asp-268 functions as the Nucleophile in the catalytic mechanism. His-272 provides a ligand contact to Ca(2+). Residue Glu-298 is the Proton donor of the active site. Ca(2+) contacts are provided by Gly-337, Phe-339, Ser-440, Asp-441, and Asp-464.

The protein belongs to the glycosyl hydrolase 13 family. Monomer. Requires Ca(2+) as cofactor. The cofactor is Na(+).

It localises to the secreted. The catalysed reaction is Endohydrolysis of (1-&gt;4)-alpha-D-glucosidic linkages in polysaccharides containing three or more (1-&gt;4)-alpha-linked D-glucose units.. In Geobacillus stearothermophilus (Bacillus stearothermophilus), this protein is Alpha-amylase (amyS).